Consider the following 607-residue polypeptide: Glutamine--fructose-6-phosphate aminotransferase [isomerizing] (607 aa).

Residue Cys2 is the Nucleophile; for GATase activity of the active site. The region spanning 2–218 (CGIIGYSGSK…DGDVVLVTKD (217 aa)) is the Glutamine amidotransferase type-2 domain. SIS domains are found at residues 280-424 (FDEQ…KLGK) and 457-597 (IAKK…VDKP). Lys602 functions as the For Fru-6P isomerization activity in the catalytic mechanism.

In terms of assembly, homodimer.

It is found in the cytoplasm. The catalysed reaction is D-fructose 6-phosphate + L-glutamine = D-glucosamine 6-phosphate + L-glutamate. Catalyzes the first step in hexosamine metabolism, converting fructose-6P into glucosamine-6P using glutamine as a nitrogen source. The protein is Glutamine--fructose-6-phosphate aminotransferase [isomerizing] of Fusobacterium nucleatum subsp. nucleatum (strain ATCC 25586 / DSM 15643 / BCRC 10681 / CIP 101130 / JCM 8532 / KCTC 2640 / LMG 13131 / VPI 4355).